The following is a 492-amino-acid chain: Heat shock factor protein 4 (492 aa).

Residues 17-122 mediate DNA binding; it reads VPAFLGKLWA…LLERVRRKVP (106 aa). Residues 129 to 203 are hydrophobic repeat HR-A/B; that stretch reads SRWRPEDLSR…GPLQTGPSST (75 aa). Residues 245-322 are interactions with DUSP26, MAPK1 and MAPK2; that stretch reads LPETTLGLSP…ECDFCVTAPP (78 aa). Positions 263–282 are disordered; sequence SDIPEDSPSPEGHRLSPSGG. Lysine 293 is covalently cross-linked (Glycyl lysine isopeptide (Lys-Gly) (interchain with G-Cter in SUMO)). Serine 298 is subject to Phosphoserine. Positions 337 to 378 are disordered; it reads GSYSPEGPRSVQQPEPRGPREVPDRGTLGLDRGNRSPESLLP. The hydrophobic repeat HR-C stretch occupies residues 364-389; that stretch reads LGLDRGNRSPESLLPPMLLRPAPETL.

It belongs to the HSF family. In terms of assembly, homotrimer. Exhibits constitutive DNA binding and forms trimers even in the absence of stress. Interacts with ALKBH4, DUSP26, MAPK1, MAPK2, MAPK8 and MAP kinase p38. Phosphorylated mainly on serine residues. Phosphorylation on Ser-298 promotes sumoylation on Lys-293. Post-translationally, isoform HSF4B is constitutively sumoylated. Sumoylation represses the transcriptional activity and is promoted by phosphorylation on Ser-298. HSFA is not sumoylated. As to expression, preferentially expressed in brain and lung. Also found in the eye. Slightly detected in liver and skeletal muscle. Isoform B is the major species in various tissues.

The protein localises to the nucleus. Heat-shock transcription factor that specifically binds heat shock promoter elements (HSE). Required for denucleation and organelle rupture and degradation that occur during eye lens terminal differentiation, when fiber cells that compose the lens degrade all membrane-bound organelles in order to provide lens with transparency to allow the passage of light. In this process, may regulate denucleation of lens fiber cells in part by activating DNASE2B transcription. May be involved in DNA repair through the transcriptional regulation of RAD51. May up-regulate p53/TP53 protein in eye lens fiber cells, possibly through protein stabilization. In the eye lens, controls the expression of alpha-crystallin B chain/CRYAB and consequently may be involved in the regulation of lysosomal acidification. Functionally, transcriptional repressor. In terms of biological role, transcriptional activator. This Mus musculus (Mouse) protein is Heat shock factor protein 4 (Hsf4).